Reading from the N-terminus, the 250-residue chain is Probable transcriptional regulatory protein ckrop_1032 (250 aa).

Residues 1 to 22 (MSGHSKWATTKHKKAANDAKRG) are disordered.

The protein belongs to the TACO1 family.

The protein resides in the cytoplasm. In Corynebacterium kroppenstedtii (strain DSM 44385 / JCM 11950 / CIP 105744 / CCUG 35717), this protein is Probable transcriptional regulatory protein ckrop_1032.